The following is a 632-amino-acid chain: Chaperone protein HtpG (632 aa).

Positions 1-339 (MTQQTMSFQA…SSDLPLNVSR (339 aa)) are a; substrate-binding. Positions 340–559 (EILQESRDVK…DNDMSGYLQR (220 aa)) are b. The interval 560 to 632 (MLKAAGQNAP…TNALLLSRAA (73 aa)) is c.

The protein belongs to the heat shock protein 90 family. In terms of assembly, homodimer.

Its subcellular location is the cytoplasm. In terms of biological role, molecular chaperone. Has ATPase activity. The chain is Chaperone protein HtpG from Burkholderia thailandensis (strain ATCC 700388 / DSM 13276 / CCUG 48851 / CIP 106301 / E264).